A 155-amino-acid chain; its full sequence is Protein-export protein SecB (155 aa).

Belongs to the SecB family. As to quaternary structure, homotetramer, a dimer of dimers. One homotetramer interacts with 1 SecA dimer.

The protein localises to the cytoplasm. Functionally, one of the proteins required for the normal export of preproteins out of the cell cytoplasm. It is a molecular chaperone that binds to a subset of precursor proteins, maintaining them in a translocation-competent state. It also specifically binds to its receptor SecA. The chain is Protein-export protein SecB from Methylococcus capsulatus (strain ATCC 33009 / NCIMB 11132 / Bath).